A 77-amino-acid chain; its full sequence is MVRYHGEFTYYVYQQSGRYFFCKKLTKKRDTSNCNHLHIIRELSFNEDELELIDFSTDGLDANDKEIIRGMIDELKK.

This is an uncharacterized protein from Escherichia coli (strain K12).